The primary structure comprises 716 residues: Dynein axonemal intermediate chain 7 (716 aa).

This sequence belongs to the DNAI7 family. As to quaternary structure, part of the multisubunit axonemal dynein complex formed at least of two heavy chains and a number of intermediate and light chains. Interacts with tubulin. Associates with microtubule. Post-translationally, ubiquitinated. Ubiquitination leads to its degradation through the 26S proteasome. Ubiquitin-proteasome-mediated DNAI7 degradation occurs in mitosis.

The protein localises to the cell projection. The protein resides in the cilium. It localises to the cytoplasm. Via its association with the multisubunit axonemal dynein complex, is potentially involved in the regulation of cilia function. May also act as a cell cycle regulator. The sequence is that of Dynein axonemal intermediate chain 7 from Homo sapiens (Human).